A 278-amino-acid polypeptide reads, in one-letter code: 4-hydroxy-tetrahydrodipicolinate reductase (278 aa).

Residues 13–18 and 111–113 each bind NAD(+); these read GAAGKM and GTT. Histidine 167 acts as the Proton donor/acceptor in catalysis. Residue histidine 168 participates in (S)-2,3,4,5-tetrahydrodipicolinate binding. Lysine 171 serves as the catalytic Proton donor. 177-178 serves as a coordination point for (S)-2,3,4,5-tetrahydrodipicolinate; the sequence is GT.

It belongs to the DapB family.

It is found in the cytoplasm. It carries out the reaction (S)-2,3,4,5-tetrahydrodipicolinate + NAD(+) + H2O = (2S,4S)-4-hydroxy-2,3,4,5-tetrahydrodipicolinate + NADH + H(+). The catalysed reaction is (S)-2,3,4,5-tetrahydrodipicolinate + NADP(+) + H2O = (2S,4S)-4-hydroxy-2,3,4,5-tetrahydrodipicolinate + NADPH + H(+). Its pathway is amino-acid biosynthesis; L-lysine biosynthesis via DAP pathway; (S)-tetrahydrodipicolinate from L-aspartate: step 4/4. Its function is as follows. Catalyzes the conversion of 4-hydroxy-tetrahydrodipicolinate (HTPA) to tetrahydrodipicolinate. The polypeptide is 4-hydroxy-tetrahydrodipicolinate reductase (Nostoc punctiforme (strain ATCC 29133 / PCC 73102)).